A 404-amino-acid polypeptide reads, in one-letter code: Cysteine desulfurase IscS (404 aa).

Residues 75–76 (AT), Asn155, Gln183, and 203–205 (SAH) each bind pyridoxal 5'-phosphate. Lys206 carries the post-translational modification N6-(pyridoxal phosphate)lysine. Residue Thr243 coordinates pyridoxal 5'-phosphate. Residue Cys328 is the Cysteine persulfide intermediate of the active site. Cys328 lines the [2Fe-2S] cluster pocket.

Belongs to the class-V pyridoxal-phosphate-dependent aminotransferase family. NifS/IscS subfamily. In terms of assembly, homodimer. Forms a heterotetramer with IscU, interacts with other sulfur acceptors. Pyridoxal 5'-phosphate is required as a cofactor.

Its subcellular location is the cytoplasm. The enzyme catalyses (sulfur carrier)-H + L-cysteine = (sulfur carrier)-SH + L-alanine. Its pathway is cofactor biosynthesis; iron-sulfur cluster biosynthesis. Functionally, master enzyme that delivers sulfur to a number of partners involved in Fe-S cluster assembly, tRNA modification or cofactor biosynthesis. Catalyzes the removal of elemental sulfur atoms from cysteine to produce alanine. Functions as a sulfur delivery protein for Fe-S cluster synthesis onto IscU, an Fe-S scaffold assembly protein, as well as other S acceptor proteins. The chain is Cysteine desulfurase IscS from Shewanella piezotolerans (strain WP3 / JCM 13877).